A 483-amino-acid polypeptide reads, in one-letter code: Regulatory protein ViaA (483 aa).

This sequence belongs to the ViaA family. Homodimer. Interacts with RavA.

The protein resides in the cytoplasm. Its function is as follows. Component of the RavA-ViaA chaperone complex, which may act on the membrane to optimize the function of some of the respiratory chains. ViaA stimulates the ATPase activity of RavA. The polypeptide is Regulatory protein ViaA (Enterobacter sp. (strain 638)).